A 279-amino-acid polypeptide reads, in one-letter code: Diaminopimelate epimerase 1 (279 aa).

Asn13 and Asn66 together coordinate substrate. Cys75 serves as the catalytic Proton donor. Residues 76–77, Asn164, Asn197, and 215–216 each bind substrate; these read GN and ER. The Proton acceptor role is filled by Cys224. Substrate is bound at residue 225 to 226; that stretch reads GT.

This sequence belongs to the diaminopimelate epimerase family. As to quaternary structure, homodimer.

It localises to the cytoplasm. It catalyses the reaction (2S,6S)-2,6-diaminopimelate = meso-2,6-diaminopimelate. It functions in the pathway amino-acid biosynthesis; L-lysine biosynthesis via DAP pathway; DL-2,6-diaminopimelate from LL-2,6-diaminopimelate: step 1/1. In terms of biological role, catalyzes the stereoinversion of LL-2,6-diaminopimelate (L,L-DAP) to meso-diaminopimelate (meso-DAP), a precursor of L-lysine and an essential component of the bacterial peptidoglycan. The chain is Diaminopimelate epimerase 1 from Nostoc sp. (strain PCC 7120 / SAG 25.82 / UTEX 2576).